The chain runs to 148 residues: Urease accessory protein UreE (148 aa).

It belongs to the UreE family.

It localises to the cytoplasm. Its function is as follows. Involved in urease metallocenter assembly. Binds nickel. Probably functions as a nickel donor during metallocenter assembly. The sequence is that of Urease accessory protein UreE from Halalkalibacterium halodurans (strain ATCC BAA-125 / DSM 18197 / FERM 7344 / JCM 9153 / C-125) (Bacillus halodurans).